The following is a 309-amino-acid chain: Tagatose-6-phosphate kinase (309 aa).

This sequence belongs to the carbohydrate kinase PfkB family. LacC subfamily.

It carries out the reaction D-tagatofuranose 6-phosphate + ATP = D-tagatofuranose 1,6-bisphosphate + ADP + H(+). Its pathway is carbohydrate metabolism; D-tagatose 6-phosphate degradation; D-glyceraldehyde 3-phosphate and glycerone phosphate from D-tagatose 6-phosphate: step 1/2. This Streptococcus pneumoniae (strain Taiwan19F-14) protein is Tagatose-6-phosphate kinase.